Here is a 697-residue protein sequence, read N- to C-terminus: Portal protein (697 aa).

The disordered stretch occupies residues methionine 633–histidine 697. The segment covering isoleucine 664 to arginine 689 has biased composition (basic and acidic residues).

It belongs to the herpesviridae portal protein family. Homododecamerizes. Interacts with terminase subunits TRM1 and TRM3.

The protein resides in the virion. It localises to the host nucleus. Functionally, forms a portal in the viral capsid through which viral DNA is translocated during DNA packaging. Assembles as a dodecamer at a single fivefold axe of the T=16 icosahedric capsid. Binds to the molecular motor that translocates the viral DNA, termed terminase. The sequence is that of Portal protein (UL104) from Homo sapiens (Human).